The following is a 237-amino-acid chain: Type III pantothenate kinase (237 aa).

Residue 6–13 participates in ATP binding; the sequence is DAGNSRVK. Residues Tyr86 and 93-96 contribute to the substrate site; that span reads GADR. Catalysis depends on Asp95, which acts as the Proton acceptor. Thr118 serves as a coordination point for ATP. Thr168 contacts substrate.

Belongs to the type III pantothenate kinase family. Homodimer. The cofactor is NH4(+). Requires K(+) as cofactor.

It is found in the cytoplasm. The catalysed reaction is (R)-pantothenate + ATP = (R)-4'-phosphopantothenate + ADP + H(+). The protein operates within cofactor biosynthesis; coenzyme A biosynthesis; CoA from (R)-pantothenate: step 1/5. Its function is as follows. Catalyzes the phosphorylation of pantothenate (Pan), the first step in CoA biosynthesis. The chain is Type III pantothenate kinase from Chromobacterium violaceum (strain ATCC 12472 / DSM 30191 / JCM 1249 / CCUG 213 / NBRC 12614 / NCIMB 9131 / NCTC 9757 / MK).